The chain runs to 101 residues: Thylakoid-associated protein slr0729 (101 aa).

It is found in the cellular thylakoid membrane. The chain is Thylakoid-associated protein slr0729 from Synechocystis sp. (strain ATCC 27184 / PCC 6803 / Kazusa).